A 223-amino-acid chain; its full sequence is Chalcone--flavanone isomerase (223 aa).

Thr-50, Asn-114, and Thr-191 together coordinate substrate.

The protein belongs to the chalcone isomerase family.

It catalyses the reaction a chalcone = a flavanone.. It functions in the pathway secondary metabolite biosynthesis; flavonoid biosynthesis. Its function is as follows. Catalyzes the intramolecular cyclization of bicyclic chalcones into tricyclic (S)-flavanones. Responsible for the isomerization of 4,2',4',6'-tetrahydroxychalcone (also termed chalcone) into naringenin. The chain is Chalcone--flavanone isomerase (CHI) from Pisum sativum (Garden pea).